Reading from the N-terminus, the 503-residue chain is Catalase (503 aa).

Residues 1–26 form a disordered region; it reads MAKDDKRLTGLFGHPVSDRENSMTAG. Active-site residues include H56 and N129. Position 339 (Y339) interacts with heme.

The protein belongs to the catalase family. As to quaternary structure, homodimer. Heme serves as cofactor.

It carries out the reaction 2 H2O2 = O2 + 2 H2O. Decomposes hydrogen peroxide into water and oxygen; serves to protect cells from the toxic effects of hydrogen peroxide. The sequence is that of Catalase (katA) from Staphylococcus haemolyticus (strain JCSC1435).